We begin with the raw amino-acid sequence, 88 residues long: Small ribosomal subunit protein uS15 (88 aa).

This sequence belongs to the universal ribosomal protein uS15 family. In terms of assembly, part of the 30S ribosomal subunit. Forms a bridge to the 50S subunit in the 70S ribosome, contacting the 23S rRNA.

One of the primary rRNA binding proteins, it binds directly to 16S rRNA where it helps nucleate assembly of the platform of the 30S subunit by binding and bridging several RNA helices of the 16S rRNA. Functionally, forms an intersubunit bridge (bridge B4) with the 23S rRNA of the 50S subunit in the ribosome. This Mesomycoplasma hyopneumoniae (strain 232) (Mycoplasma hyopneumoniae) protein is Small ribosomal subunit protein uS15.